Here is a 384-residue protein sequence, read N- to C-terminus: MNMLVVENGTILRGPELTPQRKNLVIEDGIIKEITDERAPSGERIDASKLMVCPALVNSHVHIGDSVALDVGDGRPLEDIVRPPNGLKHRILESSPPGMLMEAMRNSARDMITHGIGSFIDYREGGPEGVELLREAIGDLPISGIILGRDPVVFDQEASRAEIRRRVRGVLRVSDGFAPSGMGEITDETASIIVEECERAGKIASIHVAEHRESQRRSLEDTGMSEVERALNAGFKLLVHLTNPVREDLKLVRESGASVVLCPRSNGALSSGIPPIRRMHELGINLLLGTDNLMFNSPDMLREMEYTLKVTRGCARRYFPPVEVLRMATSNTSAFTGTGVIEEGFPADLILVEKLSGDPYLSIINRTESKNIIYLIIKGKLVKR.

Positions 60, 62, 207, and 291 each coordinate Zn(2+).

This sequence belongs to the metallo-dependent hydrolases superfamily. ATZ/TRZ family.

This Methanothermobacter thermautotrophicus (strain ATCC 29096 / DSM 1053 / JCM 10044 / NBRC 100330 / Delta H) (Methanobacterium thermoautotrophicum) protein is Putative aminohydrolase MTH_994.